Consider the following 182-residue polypeptide: Lipid A acyltransferase PagP (182 aa).

Positions M1–A21 are cleaved as a signal peptide. Residue C22 is the site of N-palmitoyl cysteine attachment. The S-diacylglycerol cysteine moiety is linked to residue C22. Residues H55, D98, and S99 contribute to the active site.

It belongs to the lipid A palmitoyltransferase family. Homodimer.

It localises to the cell outer membrane. The enzyme catalyses a lipid A + a 1,2-diacyl-sn-glycero-3-phosphocholine = a hepta-acyl lipid A + a 2-acyl-sn-glycero-3-phosphocholine. It catalyses the reaction a lipid IVA + a 1,2-diacyl-sn-glycero-3-phosphocholine = a lipid IVB + a 2-acyl-sn-glycero-3-phosphocholine. It carries out the reaction a lipid IIA + a 1,2-diacyl-sn-glycero-3-phosphocholine = a lipid IIB + a 2-acyl-sn-glycero-3-phosphocholine. Transfers a fatty acid residue from the sn-1 position of a phospholipid to the N-linked hydroxyfatty acid chain on the proximal unit of lipid A or its precursors. Required for resistance to cationic antimicrobial peptides (CAMPs). Modifications of lipid A with an acyl chain to evade host immune defenses by resisting antibody-mediated complement lysis during respiratory infection. In Bordetella bronchiseptica (strain ATCC BAA-588 / NCTC 13252 / RB50) (Alcaligenes bronchisepticus), this protein is Lipid A acyltransferase PagP.